The following is a 3977-amino-acid chain: Hybrid PKS-NRPS synthetase gkaA (3977 aa).

A Ketosynthase family 3 (KS3) domain is found at 4-441 (EEPIAVIGSG…GTNAHVILEN (438 aa)). Catalysis depends on for beta-ketoacyl synthase activity residues Cys177, His316, and His361. In terms of domain architecture, Malonyl-CoA:ACP transacylase (MAT) spans 551-867 (VFTGQGAQWP…TGVIHRGKND (317 aa)). Positions 937–1072 (NPLLGTRTTD…GRITVTLGES (136 aa)) are N-terminal hotdog fold. The PKS/mFAS DH domain maps to 937 to 1241 (NPLLGTRTTD…VVAFSEATAD (305 aa)). His969 (proton acceptor; for dehydratase activity) is an active-site residue. The interval 1087–1241 (LVSIPQDRFY…VVAFSEATAD (155 aa)) is C-terminal hotdog fold. Asp1147 functions as the Proton donor; for dehydratase activity in the catalytic mechanism. The segment at 1286–1580 (YMKKTVEEFP…FSGIDSSTPE (295 aa)) is methyltransferase (cMeT) domain. One can recognise a Ketoreductase (KR) domain in the interval 2128-2301 (TYVLFGLTSD…AASILHIGAV (174 aa)). Positions 2409–2490 (SEVFEIISGA…QLLEYAIDNM (82 aa)) constitute a Carrier 1 domain. At Ser2450 the chain carries O-(pantetheine 4'-phosphoryl)serine. The segment at 2497–2542 (HSNGEQGTVSDSGSTNIQLTPASTPSVPSVNLASDSTGSSQVGEDV) is disordered. The span at 2499-2538 (NGEQGTVSDSGSTNIQLTPASTPSVPSVNLASDSTGSSQV) shows a compositional bias: polar residues. The segment at 2584–3018 (EKIIPMSPGQ…LKDISLFSKE (435 aa)) is condensation. Positions 3048-3437 (IAEHPDTISI…GALEILGRID (390 aa)) are adenylation. In terms of domain architecture, Carrier 2 spans 3552 to 3632 (FSLTPTEDKL…AMASLITPAS (81 aa)). Ser3592 carries the post-translational modification O-(pantetheine 4'-phosphoryl)serine. A Thioester reductase (TE) domain is found at 3672 to 3890 (LTGATGFLGH…FVDLVSVQNV (219 aa)).

This sequence in the C-terminal section; belongs to the NRP synthetase family. Pantetheine 4'-phosphate is required as a cofactor.

The protein operates within mycotoxin biosynthesis. Hybrid PKS-NRPS synthetase; part of the gene cluster that mediates the biosynthesis of GKK1032, fungal natural products containing a macrocyclic para-cyclophane connected to a decahydrofluorene ring system that show potent antitumor activities. Within the pathway, the PKS-NRPS gkaA, with the help of the trans-enoyl reductase gkaC, synthesize the polyketide-tyrosyl acyl thioester product which can be reductively off-loaded by the terminal reductase (R) domain in gkaA. The PKS module of gkaA acts in combination with the trans-acting enoyl reductase gkaC to produce a methylated polyketide attached to the ACP domain. In parallel, the adenylation (A) domain of the NRPS module activated L-tyrosine, which is then transferred to the ACP domain. The condensation (C) domain subsequently links this group to the polyketide chain, forming an enzyme-bound amide. The alpha/beta hydrolase gkaG is then required to catalyze the subsequent Knoevenagel condensation that affords the 3-pyrrolin-2-one ring, whereas the three proteins gkaB, gkadX and gkaZ then function synergistically to form the cyclophane. The sequence is that of Hybrid PKS-NRPS synthetase gkaA from Penicillium citrinum.